A 66-amino-acid polypeptide reads, in one-letter code: Large ribosomal subunit protein bL32 (66 aa).

Residues 1–18 (MAIVPKRKTSKQRKHKRR) are compositionally biased toward basic residues. The segment at 1–21 (MAIVPKRKTSKQRKHKRRTND) is disordered.

The protein belongs to the bacterial ribosomal protein bL32 family.

The protein is Large ribosomal subunit protein bL32 of Mycoplasmopsis agalactiae (strain NCTC 10123 / CIP 59.7 / PG2) (Mycoplasma agalactiae).